Consider the following 404-residue polypeptide: Cysteine desulfurase IscS (404 aa).

Pyridoxal 5'-phosphate-binding positions include 75–76 (AT), Asn155, Gln183, and 203–205 (SGH). Residue Lys206 is modified to N6-(pyridoxal phosphate)lysine. Thr243 contributes to the pyridoxal 5'-phosphate binding site. Cys328 (cysteine persulfide intermediate) is an active-site residue. Cys328 lines the [2Fe-2S] cluster pocket.

This sequence belongs to the class-V pyridoxal-phosphate-dependent aminotransferase family. NifS/IscS subfamily. Homodimer. Forms a heterotetramer with IscU, interacts with other sulfur acceptors. It depends on pyridoxal 5'-phosphate as a cofactor.

The protein resides in the cytoplasm. It catalyses the reaction (sulfur carrier)-H + L-cysteine = (sulfur carrier)-SH + L-alanine. Its pathway is cofactor biosynthesis; iron-sulfur cluster biosynthesis. Master enzyme that delivers sulfur to a number of partners involved in Fe-S cluster assembly, tRNA modification or cofactor biosynthesis. Catalyzes the removal of elemental sulfur atoms from cysteine to produce alanine. Functions as a sulfur delivery protein for Fe-S cluster synthesis onto IscU, an Fe-S scaffold assembly protein, as well as other S acceptor proteins. The polypeptide is Cysteine desulfurase IscS (Shewanella amazonensis (strain ATCC BAA-1098 / SB2B)).